The chain runs to 255 residues: 4-hydroxy-tetrahydrodipicolinate reductase (255 aa).

NAD(+)-binding positions include 9-14 (GFKGKM), 89-91 (GTT), and 115-118 (APNF). The active-site Proton donor/acceptor is the His145. His146 contacts (S)-2,3,4,5-tetrahydrodipicolinate. Catalysis depends on Lys149, which acts as the Proton donor. Residue 155-156 (GT) participates in (S)-2,3,4,5-tetrahydrodipicolinate binding.

This sequence belongs to the DapB family.

It localises to the cytoplasm. The enzyme catalyses (S)-2,3,4,5-tetrahydrodipicolinate + NAD(+) + H2O = (2S,4S)-4-hydroxy-2,3,4,5-tetrahydrodipicolinate + NADH + H(+). It carries out the reaction (S)-2,3,4,5-tetrahydrodipicolinate + NADP(+) + H2O = (2S,4S)-4-hydroxy-2,3,4,5-tetrahydrodipicolinate + NADPH + H(+). It functions in the pathway amino-acid biosynthesis; L-lysine biosynthesis via DAP pathway; (S)-tetrahydrodipicolinate from L-aspartate: step 4/4. Its function is as follows. Catalyzes the conversion of 4-hydroxy-tetrahydrodipicolinate (HTPA) to tetrahydrodipicolinate. The polypeptide is 4-hydroxy-tetrahydrodipicolinate reductase (Streptococcus sanguinis (strain SK36)).